A 687-amino-acid chain; its full sequence is Chloride channel protein ClC-Ka (687 aa).

4 helical membrane passes run 52–72 (FLMT…FAIG), 161–181 (LFLG…AYLG), 202–222 (VAAA…GVLF), and 236–256 (YWRG…LAVF). Ca(2+) is bound by residues E259, E261, D278, and E281. The next 6 membrane-spanning stretches (helical) occupy residues 282-302 (IFFF…YLFC), 329-349 (ALAT…HFLA), 396-416 (FTIF…LILA), 417-437 (TTIP…AAIG), 452-472 (IVTG…AGAA), and 486-506 (LLAF…MAVL). Topologically, residues 507-687 (AANAIAQSCQ…SNLTNPPAPK (181 aa)) are cytoplasmic. 2 consecutive CBS domains span residues 551 to 609 (MNHS…EPPS) and 626 to 684 (CPTE…TNPP).

The protein belongs to the chloride channel (TC 2.A.49) family. CLCNKA subfamily. Homodimer. Interacts with BSND.

The protein localises to the basolateral cell membrane. The catalysed reaction is chloride(in) = chloride(out). The enzyme catalyses bromide(in) = bromide(out). It carries out the reaction nitrate(in) = nitrate(out). It catalyses the reaction iodide(out) = iodide(in). Its activity is regulated as follows. Activated by extracellular Ca(2+) and inhibited by extracellular acidic pH. Functionally, anion-selective channel permeable to small monovalent anions with ion selectivity for chloride &gt; bromide &gt; nitrate &gt; iodide. Forms a homodimeric channel where each subunit has its own ion conduction pathway. May conduct double-barreled currents controlled by two types of gates, two fast gates that control each subunit independently and a slow common gate that opens and shuts off both subunits simultaneously. Assembles with the regulatory subunit BSND/Barttin for sorting at the basolateral plasma membrane domain and functional switch to the ion conducting state. CLCNKA:BSND channels display mostly a linear current-voltage relationship with fast gating at negative potentials. Mediates transepithelial chloride transport from the lumen to interstitial compartment along the thin ascending limb of Henle's loop, contributing to generation of hypertonic medullary interstitium as a countercurrent system to achieve urine concentration. Conducts chloride currents in the stria vascularis of the inner ear to establish the endocochlear potential necessary for normal hearing. This Homo sapiens (Human) protein is Chloride channel protein ClC-Ka.